An 82-amino-acid polypeptide reads, in one-letter code: U-actitoxin-Oulsp2 (82 aa).

The first 21 residues, 1 to 21 (MNTKLVVVFLLSAILFVSVTA), serve as a signal peptide directing secretion. A propeptide spanning residues 22–46 (SRPGKDLERDEAYETYDDERPYFKR) is cleaved from the precursor. A ShKT domain is found at 48-82 (CKDNLPAATCSNVKANNNCSSEKYKTNCAKTCGEC). 3 disulfides stabilise this stretch: cysteine 48–cysteine 82, cysteine 57–cysteine 75, and cysteine 66–cysteine 79. Residues 70-71 (KY) form a theoritically crucial for binding to potassium channels region.

The protein belongs to the sea anemone type 1 potassium channel toxin family. Type 1b subfamily.

The protein localises to the secreted. It is found in the nematocyst. In terms of biological role, probable toxin with unknown function. In contrast to similar toxins, this toxin does not inhibit voltage-gated potassium channels (tested at 100 nM). Does not show antimicrobial activities against bacteria and yeasts. This is U-actitoxin-Oulsp2 from Oulactis sp. (Sea anemone).